We begin with the raw amino-acid sequence, 146 residues long: 16.0 kDa heat shock protein, peroxisomal (146 aa).

A sHSP domain is found at 23-143; sequence WASASATAAM…RPRTRPIAVS (121 aa). The short motif at 144 to 146 is the Microbody targeting signal element; the sequence is SKL.

Belongs to the small heat shock protein (HSP20) family. May form oligomeric structures.

It localises to the peroxisome. The protein is 16.0 kDa heat shock protein, peroxisomal (HSP16.0) of Oryza sativa subsp. japonica (Rice).